A 96-amino-acid chain; its full sequence is Molybdopterin synthase sulfur carrier subunit (96 aa).

A 1-thioglycine; alternate modification is found at G96. G96 carries the glycyl adenylate; alternate modification.

Belongs to the MoaD family. MOCS2A subfamily. Heterotetramer; composed of 2 small (MOCS2A) and 2 large (MOCS2B) subunits. C-terminal thiocarboxylation occurs in 2 steps, it is first acyl-adenylated (-COAMP) via the hesA/moeB/thiF part of MOCS3, then thiocarboxylated (-COSH) via the rhodanese domain of MOCS3.

Its subcellular location is the cytoplasm. It participates in cofactor biosynthesis; molybdopterin biosynthesis. Its function is as follows. Acts as a sulfur carrier required for molybdopterin biosynthesis. Component of the molybdopterin synthase complex that catalyzes the conversion of precursor Z into molybdopterin by mediating the incorporation of 2 sulfur atoms into precursor Z to generate a dithiolene group. In the complex, serves as sulfur donor by being thiocarboxylated (-COSH) at its C-terminus by MOCS3. After interaction with MOCS2B, the sulfur is then transferred to precursor Z to form molybdopterin. The polypeptide is Molybdopterin synthase sulfur carrier subunit (Arabidopsis thaliana (Mouse-ear cress)).